We begin with the raw amino-acid sequence, 240 residues long: Arginine transport ATP-binding protein ArtM (240 aa).

Positions 2–236 (IKVEKLSKSF…PKSKRAQDFL (235 aa)) constitute an ABC transporter domain. 34–41 (GPSGSGKS) serves as a coordination point for ATP.

Belongs to the ABC transporter superfamily.

The protein localises to the cell membrane. In terms of biological role, part of a binding-protein-dependent transport system for arginine. Probably responsible for energy coupling to the transport system. This Bacillus subtilis (strain 168) protein is Arginine transport ATP-binding protein ArtM (artM).